The primary structure comprises 168 residues: G/U mismatch-specific DNA glycosylase (168 aa).

Belongs to the uracil-DNA glycosylase (UDG) superfamily. TDG/mug family. In terms of assembly, binds DNA as a monomer.

The protein resides in the cytoplasm. It carries out the reaction Specifically hydrolyzes mismatched double-stranded DNA and polynucleotides, releasing free uracil.. Excises ethenocytosine and uracil, which can arise by alkylation or deamination of cytosine, respectively, from the corresponding mispairs with guanine in ds-DNA. It is capable of hydrolyzing the carbon-nitrogen bond between the sugar-phosphate backbone of the DNA and the mispaired base. The complementary strand guanine functions in substrate recognition. Required for DNA damage lesion repair in stationary-phase cells. This chain is G/U mismatch-specific DNA glycosylase, found in Salmonella dublin (strain CT_02021853).